Consider the following 175-residue polypeptide: MADQDQTNQQAGSDAPSFNLQRVYLKDLSLEMPNAPHVFLEQEAPQVEVSINVGGQRLAETVFESTVTVTVTTRVNDKVLYLVEGTQAGIFELANIPAEQMDPLLGIVCPTMLYPYLRANVADAITRTSLPALHLAEVNFQALYEQRLAEMAQQQPDAANGNDSGIILPPGATRQ.

Residues 153–163 (QQQPDAANGND) show a composition bias toward polar residues. Residues 153-175 (QQQPDAANGNDSGIILPPGATRQ) form a disordered region.

This sequence belongs to the SecB family. As to quaternary structure, homotetramer, a dimer of dimers. One homotetramer interacts with 1 SecA dimer.

Its subcellular location is the cytoplasm. Functionally, one of the proteins required for the normal export of preproteins out of the cell cytoplasm. It is a molecular chaperone that binds to a subset of precursor proteins, maintaining them in a translocation-competent state. It also specifically binds to its receptor SecA. The protein is Protein-export protein SecB of Bordetella bronchiseptica (strain ATCC BAA-588 / NCTC 13252 / RB50) (Alcaligenes bronchisepticus).